Here is a 518-residue protein sequence, read N- to C-terminus: Transcription factor TT8 (518 aa).

Coiled coils occupy residues 220–240 (EVHEEAEDEEEVEEEMTMSEE) and 405–428 (VNHLRKRVHELENTHHEQQHKRTR). Positions 359–408 (REDLSHVVAERRRREKLNEKFITLRSMVPFVTKMDKVSILGDTIAYVNHL) constitute a bHLH domain.

This sequence belongs to the bHLH protein family. As to quaternary structure, homodimer. Interacts with MYB4, MYB5, MYB6, MYB82, MYB113, MYB114, MYB75/PAP1, MYB90/PAP2, and TT2. As to expression, buds, flowers and developing siliques, but not in leaves, stems and roots.

It localises to the nucleus. Its function is as follows. Transcription activator, when associated with MYB75/PAP1 or MYB90/PAP2. Involved in the control of flavonoid pigmentation. Plays a key role in regulating leucoanthocyanidin reductase (BANYULS) and dihydroflavonol-4-reductase (DFR). Not required for leucoanthocyanidin dioxygenase (LDOX) expression. This chain is Transcription factor TT8, found in Arabidopsis thaliana (Mouse-ear cress).